A 525-amino-acid polypeptide reads, in one-letter code: GMP synthase [glutamine-hydrolyzing] (525 aa).

Residues 9-207 (RILILDFGSQ…VRDICQCEAL (199 aa)) form the Glutamine amidotransferase type-1 domain. C86 serves as the catalytic Nucleophile. Residues H181 and E183 contribute to the active site. One can recognise a GMPS ATP-PPase domain in the interval 208–400 (WTPAKIIDDA…LGLPYDMLYR (193 aa)). 235–241 (SGGVDSS) is a binding site for ATP.

Homodimer.

The catalysed reaction is XMP + L-glutamine + ATP + H2O = GMP + L-glutamate + AMP + diphosphate + 2 H(+). It functions in the pathway purine metabolism; GMP biosynthesis; GMP from XMP (L-Gln route): step 1/1. Its function is as follows. Catalyzes the synthesis of GMP from XMP. This is GMP synthase [glutamine-hydrolyzing] from Salmonella newport (strain SL254).